The sequence spans 122 residues: Large ribosomal subunit protein uL14 (122 aa).

Belongs to the universal ribosomal protein uL14 family. Part of the 50S ribosomal subunit. Forms a cluster with proteins L3 and L19. In the 70S ribosome, L14 and L19 interact and together make contacts with the 16S rRNA in bridges B5 and B8.

Functionally, binds to 23S rRNA. Forms part of two intersubunit bridges in the 70S ribosome. This is Large ribosomal subunit protein uL14 from Halorhodospira halophila (strain DSM 244 / SL1) (Ectothiorhodospira halophila (strain DSM 244 / SL1)).